The chain runs to 60 residues: UPF0434 protein Vapar_2640 (60 aa).

This sequence belongs to the UPF0434 family.

This Variovorax paradoxus (strain S110) protein is UPF0434 protein Vapar_2640.